A 124-amino-acid polypeptide reads, in one-letter code: Ubiquitin-related modifier 1 (124 aa).

A disordered region spans residues 34–53 (IPSLVPKDNTTSAKNPPPKD). Gly124 carries the 1-thioglycine modification. Gly124 participates in a covalent cross-link: Glycyl lysine isopeptide (Gly-Lys) (interchain with K-? in acceptor proteins).

It belongs to the URM1 family. Post-translationally, C-terminal thiocarboxylation occurs in 2 steps, it is first acyl-adenylated (-COAMP) via the hesA/moeB/thiF part of UBA4, then thiocarboxylated (-COSH) via the rhodanese domain of UBA4.

The protein localises to the cytoplasm. It functions in the pathway tRNA modification; 5-methoxycarbonylmethyl-2-thiouridine-tRNA biosynthesis. Functionally, acts as a sulfur carrier required for 2-thiolation of mcm(5)S(2)U at tRNA wobble positions of cytosolic tRNA(Lys), tRNA(Glu) and tRNA(Gln). Serves as sulfur donor in tRNA 2-thiolation reaction by being thiocarboxylated (-COSH) at its C-terminus by the MOCS3 homolog UBA4. The sulfur is then transferred to tRNA to form 2-thiolation of mcm(5)S(2)U. Prior mcm(5) tRNA modification by the elongator complex is required for 2-thiolation. Also acts as a ubiquitin-like protein (UBL) that is covalently conjugated via an isopeptide bond to lysine residues of target proteins such as AHP1. The thiocarboxylated form serves as substrate for conjugation and oxidative stress specifically induces the formation of UBL-protein conjugates. The sequence is that of Ubiquitin-related modifier 1 from Coprinopsis cinerea (strain Okayama-7 / 130 / ATCC MYA-4618 / FGSC 9003) (Inky cap fungus).